Consider the following 375-residue polypeptide: Queuine tRNA-ribosyltransferase (375 aa).

Aspartate 89 functions as the Proton acceptor in the catalytic mechanism. Residues aspartate 89–phenylalanine 93, aspartate 143, glutamine 187, and glycine 214 contribute to the substrate site. The interval glycine 245–aspartate 251 is RNA binding. Residue aspartate 264 is the Nucleophile of the active site. The interval threonine 269–arginine 273 is RNA binding; important for wobble base 34 recognition. Cysteine 302, cysteine 304, cysteine 307, and histidine 333 together coordinate Zn(2+).

This sequence belongs to the queuine tRNA-ribosyltransferase family. Homodimer. Within each dimer, one monomer is responsible for RNA recognition and catalysis, while the other monomer binds to the replacement base PreQ1. The cofactor is Zn(2+).

It catalyses the reaction 7-aminomethyl-7-carbaguanine + guanosine(34) in tRNA = 7-aminomethyl-7-carbaguanosine(34) in tRNA + guanine. It participates in tRNA modification; tRNA-queuosine biosynthesis. Its function is as follows. Catalyzes the base-exchange of a guanine (G) residue with the queuine precursor 7-aminomethyl-7-deazaguanine (PreQ1) at position 34 (anticodon wobble position) in tRNAs with GU(N) anticodons (tRNA-Asp, -Asn, -His and -Tyr). Catalysis occurs through a double-displacement mechanism. The nucleophile active site attacks the C1' of nucleotide 34 to detach the guanine base from the RNA, forming a covalent enzyme-RNA intermediate. The proton acceptor active site deprotonates the incoming PreQ1, allowing a nucleophilic attack on the C1' of the ribose to form the product. After dissociation, two additional enzymatic reactions on the tRNA convert PreQ1 to queuine (Q), resulting in the hypermodified nucleoside queuosine (7-(((4,5-cis-dihydroxy-2-cyclopenten-1-yl)amino)methyl)-7-deazaguanosine). The protein is Queuine tRNA-ribosyltransferase of Aliivibrio salmonicida (strain LFI1238) (Vibrio salmonicida (strain LFI1238)).